We begin with the raw amino-acid sequence, 460 residues long: Fumarate hydratase class II (460 aa).

Residues Ser-95–Thr-97, His-126–Asp-129, Ser-136–Asn-138, and Thr-184 each bind substrate. Catalysis depends on His-185, which acts as the Proton donor/acceptor. The active site involves Ser-315. Residues Ser-316 and Lys-321–Asn-323 each bind substrate.

This sequence belongs to the class-II fumarase/aspartase family. Fumarase subfamily. As to quaternary structure, homotetramer.

The protein localises to the cytoplasm. The enzyme catalyses (S)-malate = fumarate + H2O. The protein operates within carbohydrate metabolism; tricarboxylic acid cycle; (S)-malate from fumarate: step 1/1. In terms of biological role, involved in the TCA cycle. Catalyzes the stereospecific interconversion of fumarate to L-malate. The sequence is that of Fumarate hydratase class II from Chlamydia pneumoniae (Chlamydophila pneumoniae).